The sequence spans 294 residues: Small ribosomal subunit biogenesis GTPase RsgA (294 aa).

The CP-type G domain maps to 63-223; the sequence is KNELLRPPIA…VADTPGFSSL (161 aa). Residues 112-115 and 166-174 each bind GTP; these read SKID and GQSGVGKSS. Residues C247, C252, H254, and C260 each coordinate Zn(2+).

This sequence belongs to the TRAFAC class YlqF/YawG GTPase family. RsgA subfamily. Monomer. Associates with 30S ribosomal subunit, binds 16S rRNA. Zn(2+) serves as cofactor.

The protein localises to the cytoplasm. Its function is as follows. One of several proteins that assist in the late maturation steps of the functional core of the 30S ribosomal subunit. Helps release RbfA from mature subunits. May play a role in the assembly of ribosomal proteins into the subunit. Circularly permuted GTPase that catalyzes slow GTP hydrolysis, GTPase activity is stimulated by the 30S ribosomal subunit. This Halalkalibacterium halodurans (strain ATCC BAA-125 / DSM 18197 / FERM 7344 / JCM 9153 / C-125) (Bacillus halodurans) protein is Small ribosomal subunit biogenesis GTPase RsgA.